We begin with the raw amino-acid sequence, 102 residues long: Large ribosomal subunit protein bL21 (102 aa).

The protein belongs to the bacterial ribosomal protein bL21 family. Part of the 50S ribosomal subunit. Contacts protein L20.

Its function is as follows. This protein binds to 23S rRNA in the presence of protein L20. In Geobacter sp. (strain M21), this protein is Large ribosomal subunit protein bL21.